We begin with the raw amino-acid sequence, 701 residues long: Polyribonucleotide nucleotidyltransferase (701 aa).

2 residues coordinate Mg(2+): Asp-490 and Asp-496. One can recognise a KH domain in the interval 557–616; sequence PKVVTMSINPDKIRDVIGPGGKKINEIIDETGVKLDIEQDGTIFIGAVDQAMINRAKEII. Residues 626–694 enclose the S1 motif domain; the sequence is GQVYHAKVKR…KQGRVNASHK (69 aa).

Belongs to the polyribonucleotide nucleotidyltransferase family. Mg(2+) is required as a cofactor.

The protein resides in the cytoplasm. The catalysed reaction is RNA(n+1) + phosphate = RNA(n) + a ribonucleoside 5'-diphosphate. Involved in mRNA degradation. Catalyzes the phosphorolysis of single-stranded polyribonucleotides processively in the 3'- to 5'-direction. The polypeptide is Polyribonucleotide nucleotidyltransferase (Staphylococcus epidermidis (strain ATCC 12228 / FDA PCI 1200)).